Consider the following 1527-residue polypeptide: DNA (cytosine-5)-methyltransferase 1A (1527 aa).

2 disordered regions span residues 1-62 (MAKS…PKRA) and 661-718 (GDTK…KEIK). Composition is skewed to acidic residues over residues 25–36 (EPVENENLESEF) and 664–692 (KEED…EVNV). Residues 709-718 (SSADTRKEIK) are compositionally biased toward basic and acidic residues. BAH domains lie at 742-874 (LSIS…FSLP) and 910-1049 (ITYN…KQLP). The 435-residue stretch at 1092 to 1526 (LATLDIFAGC…RKLKQAIDAK (435 aa)) folds into the SAM-dependent MTase C5-type domain. C1197 is a catalytic residue.

Belongs to the class I-like SAM-binding methyltransferase superfamily. C5-methyltransferase family. Expressed in roots and inflorescences. Expressed in roots, panicles, anthers, pistils, endosperm and imbibed embryos. Expressed in tissues containing actively replicating and dividing cells, such as shoot and root meristems.

It localises to the nucleus. It carries out the reaction a 2'-deoxycytidine in DNA + S-adenosyl-L-methionine = a 5-methyl-2'-deoxycytidine in DNA + S-adenosyl-L-homocysteine + H(+). Its function is as follows. Probably methylates CpG residues and maintains DNA methylation. May be involved in methylation-dependent gene silencing. May play a minor role in the maintenance of DNA methylation. In Oryza sativa subsp. japonica (Rice), this protein is DNA (cytosine-5)-methyltransferase 1A.